A 482-amino-acid chain; its full sequence is Aspartyl/glutamyl-tRNA(Asn/Gln) amidotransferase subunit B (482 aa).

It belongs to the GatB/GatE family. GatB subfamily. In terms of assembly, heterotrimer of A, B and C subunits.

It catalyses the reaction L-glutamyl-tRNA(Gln) + L-glutamine + ATP + H2O = L-glutaminyl-tRNA(Gln) + L-glutamate + ADP + phosphate + H(+). The catalysed reaction is L-aspartyl-tRNA(Asn) + L-glutamine + ATP + H2O = L-asparaginyl-tRNA(Asn) + L-glutamate + ADP + phosphate + 2 H(+). Functionally, allows the formation of correctly charged Asn-tRNA(Asn) or Gln-tRNA(Gln) through the transamidation of misacylated Asp-tRNA(Asn) or Glu-tRNA(Gln) in organisms which lack either or both of asparaginyl-tRNA or glutaminyl-tRNA synthetases. The reaction takes place in the presence of glutamine and ATP through an activated phospho-Asp-tRNA(Asn) or phospho-Glu-tRNA(Gln). This is Aspartyl/glutamyl-tRNA(Asn/Gln) amidotransferase subunit B from Thermotoga petrophila (strain ATCC BAA-488 / DSM 13995 / JCM 10881 / RKU-1).